Consider the following 107-residue polypeptide: Thioredoxin (107 aa).

Residues 2–107 (DSIVHVTDDS…QLTAFLDSNX (106 aa)) form the Thioredoxin domain. Cysteines 32 and 35 form a disulfide.

This sequence belongs to the thioredoxin family.

Its function is as follows. Participates in various redox reactions through the reversible oxidation of its active center dithiol to a disulfide and catalyzes dithiol-disulfide exchange reactions. The chain is Thioredoxin (trxA) from Allochromatium vinosum (Chromatium vinosum).